We begin with the raw amino-acid sequence, 278 residues long: Elongation factor Ts (278 aa).

Positions 79 to 82 (TDFV) are involved in Mg(2+) ion dislocation from EF-Tu.

The protein belongs to the EF-Ts family.

The protein resides in the cytoplasm. Associates with the EF-Tu.GDP complex and induces the exchange of GDP to GTP. It remains bound to the aminoacyl-tRNA.EF-Tu.GTP complex up to the GTP hydrolysis stage on the ribosome. In Borrelia hermsii (strain HS1 / DAH), this protein is Elongation factor Ts.